The primary structure comprises 864 residues: MFGIFDKGQKIKGTVVLMPKNVLDFNAITSIGKGGVIDTATGILGQGVSLVGGVIDTATSFLGRNISMQLISATQTDGSGNGKVGKEVYLEKHLPTLPTLGARQDAFSIFFEWDASFGIPGAFYIKNFMTDEFFLVSVKLEDIPNHGTIEFVCNSWVYNFRSYKKNRIFFVNDTYLPSATPAPLLKYRKEELEVLRGDGTGKRKDFDRIYDYDVYNDLGNPDGGDPRPILGGSSIYPYPRRVRTGRERTRTDPNSEKPGEVYVPRDENFGHLKSSDFLTYGIKSLSHDVIPLFKSAIFQLRVTSSEFESFEDVRSLYEGGIKLPTDILSQISPLPALKEIFRTDGENVLQFPPPHVAKVSKSGWMTDEEFAREVIAGVNPNVIRRLQEFPPKSTLDPTLYGDQTSTITKEQLEINMGGVTVEEALSTQRLFILDYQDAFIPYLTRINSLPTAKAYATRTILFLKDDGTLKPLAIELSKPHPDGDNLGPESIVVLPATEGVDSTIWLLAKAHVIVNDSGYHQLVSHWLNTHAVMEPFAIATNRHLSVLHPIYKLLYPHYRDTININGLARQSLINADGIIEKSFLPGKYSIEMSSSVYKNWVFTDQALPADLVKRGLAIEDPSAPHGLRLVIEDYPYAVDGLEIWDAIKTWVHEYVSLYYPTDAAVQQDTELQAWWKEAVEKGHGDLKEKPWWPKMQTTEDLIQSCSIIVWTASALHAAVNFGQYPYGGLILNRPTLARRFIPAEGTPEYDEMVKNPQKAYLRTITPKFETLIDLSVIEILSRHASDEIYLGERETPNWTTDKKALEAFKRFGSKLTGIEGKINARNSDPSLRNRTGPVQLPYTLLHRSSEEGLTFKGIPNSISI.

The PLAT domain occupies 44-171; it reads LGQGVSLVGG…SYKKNRIFFV (128 aa). The Lipoxygenase domain maps to 174–864; the sequence is TYLPSATPAP…FKGIPNSISI (691 aa). The disordered stretch occupies residues 244-264; sequence TGRERTRTDPNSEKPGEVYVP. Fe cation-binding residues include histidine 525, histidine 530, histidine 716, asparagine 720, and isoleucine 864.

Belongs to the lipoxygenase family. In terms of assembly, monomer. The cofactor is Fe cation. In terms of tissue distribution, germinated cotyledons.

The protein resides in the cytoplasm. The catalysed reaction is (9Z,12Z)-octadecadienoate + O2 = (9S)-hydroperoxy-(10E,12Z)-octadecadienoate. Its pathway is lipid metabolism; oxylipin biosynthesis. Functionally, plant lipoxygenase may be involved in a number of diverse aspects of plant physiology including growth and development, pest resistance, and senescence or responses to wounding. It catalyzes the hydroperoxidation of lipids containing a cis,cis-1,4-pentadiene structure. The sequence is that of Seed linoleate 9S-lipoxygenase (LOX1.4) from Glycine max (Soybean).